The sequence spans 291 residues: uncharacterized protein (291 aa).

Transmembrane regions (helical) follow at residues 13–33 (FDLF…MEMG), 40–60 (LGTV…LGFL), 81–101 (GFLN…LICI), 128–148 (FGLF…RLLL), 158–178 (VILG…YLEY), and 220–240 (GNVW…ILLA). Asn249 is a glycosylation site (N-linked (GlcNAc...) asparagine). The disordered stretch occupies residues 269 to 291 (MASEDPPKDPLPRQEGGGGDTIA).

It localises to the membrane. This is an uncharacterized protein from Encephalitozoon cuniculi (strain GB-M1) (Microsporidian parasite).